Consider the following 102-residue polypeptide: Protein translation factor SUI1 homolog (102 aa).

The protein belongs to the SUI1 family.

This is Protein translation factor SUI1 homolog from Methanococcus vannielii.